The following is a 320-amino-acid chain: mRNA decay activator protein ZFP36 (320 aa).

The tract at residues 1 to 15 (MDLSAIYESLMSMSH) is necessary for nuclear export. Residues 1-93 (MDLSAIYESL…PTSPTATPTT (93 aa)) form a necessary and sufficient for the association with mRNA decay enzymes and mRNA decay activation region. Necessary for localization of ARE-containing mRNAs to processing bodies (PBs) regions lie at residues 1-167 (MDLS…DLAL) and 93-320 (TSSR…SVSE). A disordered region spans residues 17–50 (LSPDHGGTESSGGLWNINSSDSIPSGVTSRLTGR). The span at 27–50 (SGGLWNINSSDSIPSGVTSRLTGR) shows a compositional bias: polar residues. The residue at position 53 (serine 53) is a Phosphoserine; by MAPKAPK2. Serine 59 bears the Phosphoserine mark. A P-P-P-P-G repeat occupies 64 to 68 (PPPPG). Positions 66 to 85 (PPGFAPLAPRPGPELSPSPT) are enriched in pro residues. The interval 66-95 (PPGFAPLAPRPGPELSPSPTSPTATPTTSS) is disordered. Serine 81 and serine 83 each carry phosphoserine. A Phosphothreonine modification is found at threonine 85. Serine 86 carries the post-translational modification Phosphoserine. Over residues 86–95 (SPTATPTTSS) the composition is skewed to low complexity. Residues 88 to 161 (TATPTTSSRY…GSRCHFIHNP (74 aa)) are necessary for nuclear localization. Positions 90-166 (TPTTSSRYKT…FIHNPTEDLA (77 aa)) are necessary for RNA-binding. C3H1-type zinc fingers lie at residues 96–124 (RYKT…HGPG) and 134–162 (KYKT…HNPT). A necessary for interaction with PABPN1 region spans residues 96–187 (RYKTELCRTY…ISFSGLPSGR (92 aa)). Residues 167–320 (LPGQPHVLRQ…PIFNRISVSE (154 aa)) form a necessary for mRNA decay activation region. At serine 179 the chain carries Phosphoserine; by MAPKAPK2. A disordered region spans residues 180-310 (FSGLPSGRRT…PQPPAPPRRL (131 aa)). Phosphoserine is present on serine 190. Residues 191–195 (PPPPG) form a P-P-P-P-G repeat. Residues 197–209 (SGPSLSSCSFSPS) show a composition bias toward low complexity. Serine 211 carries the post-translational modification Phosphoserine. One copy of the P-P-P-P-G repeat lies at 212–216 (PPPPG). Serine 221 is subject to Phosphoserine; by MAPK1; in vitro. A Phosphothreonine modification is found at threonine 251. 2 positions are modified to phosphoserine: serine 270 and serine 290. The segment covering 280 to 290 (SSGSSLGGSDS) has biased composition (low complexity). The span at 300–309 (PPQPPAPPRR) shows a compositional bias: pro residues. Positions 306–320 (PPRRLPIFNRISVSE) are interaction with CNOT1. Serine 317 bears the Phosphoserine mark.

In terms of assembly, associates with cytoplasmic CCR4-NOT and PAN2-PAN3 deadenylase complexes to trigger ARE-containing mRNA deadenylation and decay processes. Part of a mRNA decay activation complex at least composed of poly(A)-specific exoribonucleases CNOT6, EXOSC2 and XRN1 and mRNA-decapping enzymes DCP1A and DCP2. Associates with the RNA exosome complex. Interacts (via phosphorylated form) with 14-3-3 proteins; these interactions promote exclusion of ZFP36 from cytoplasmic stress granules in response to arsenite treatment in a MAPKAPK2-dependent manner and does not prevent CCR4-NOT deadenylase complex recruitment or ZFP36-induced ARE-containing mRNA deadenylation and decay processes. Interacts with 14-3-3 proteins; these interactions occur in response to rapamycin in an Akt-dependent manner. Interacts with AGO2 and AGO4. Interacts (via C-terminus) with CNOT1; this interaction occurs in a RNA-independent manner and induces mRNA deadenylation. Interacts (via N-terminus) with CNOT6. Interacts with CNOT6L. Interacts (via C-terminus) with CNOT7; this interaction occurs in a RNA-independent manner, induces mRNA deadenylation and is inhibited in a phosphorylation MAPKAPK2-dependent manner. Interacts (via unphosphorylated form) with CNOT8; this interaction occurs in a RNA-independent manner and is inhibited in a phosphorylation MAPKAPK2-dependent manner. Interacts with DCP1A. Interacts (via N-terminus) with DCP2. Interacts with EDC3. Interacts (via N-terminus) with EXOSC2. Interacts with heat shock 70 kDa proteins. Interacts with KHSRP; this interaction increases upon cytokine-induced treatment. Interacts with MAP3K4; this interaction enhances the association with SH3KBP1/CIN85. Interacts with MAPKAPK2; this interaction occurs upon skeletal muscle satellite cell activation. Interacts with NCL. Interacts with NUP214; this interaction increases upon lipopolysaccharide (LPS) stimulation. Interacts with PABPC1; this interaction occurs in a RNA-dependent manner. Interacts (via hypophosphorylated form) with PABPN1 (via RRM domain and C-terminal arginine-rich region); this interaction occurs in the nucleus in a RNA-independent manner, decreases in presence of single-stranded poly(A) RNA-oligomer and in a p38 MAPK-dependent-manner and inhibits nuclear poly(A) tail synthesis. Interacts with PAN2. Interacts (via C3H1-type zinc finger domains) with PKM. Interacts (via C3H1-type zinc finger domains) with nuclear RNA poly(A) polymerase. Interacts with PPP2CA; this interaction occurs in LPS-stimulated cells and induces ZFP36 dephosphorylation, and hence may promote ARE-containing mRNAs decay. Interacts (via C-terminus) with PRR5L (via C-terminus); this interaction may accelerate ZFP36-mediated mRNA decay during stress. Interacts (via C-terminus) with SFN; this interaction occurs in a phosphorylation-dependent manner. Interacts (via extreme C-terminal region) with SH3KBP1/CIN85 (via SH3 domains); this interaction enhances MAP3K4-induced phosphorylation of ZFP36 at Ser-59 and Ser-86 and does not alter neither ZFP36 binding to ARE-containing transcripts nor TNF-alpha mRNA decay. Interacts with XRN1. Interacts (via C-terminus and Ser-179 phosphorylated form) with YWHAB; this interaction occurs in a p38/MAPKAPK2-dependent manner, increases cytoplasmic localization of ZFP36 and protects ZFP36 from Ser-179 dephosphorylation by serine/threonine phosphatase 2A, and hence may be crucial for stabilizing ARE-containing mRNAs. Interacts (via phosphorylated form) with YWHAE. Interacts (via C-terminus) with YWHAG; this interaction occurs in a phosphorylation-dependent manner. Interacts with YWHAH; this interaction occurs in a phosphorylation-dependent manner. Interacts with YWHAQ; this interaction occurs in a phosphorylation-dependent manner. Interacts with (via C-terminus) YWHAZ; this interaction occurs in a phosphorylation-dependent manner. Does not interact with SH3KBP1. Interacts (via P-P-P-P-G repeats) with GIGYF2; the interaction is direct. In terms of processing, phosphorylated. Phosphorylation at serine and/or threonine residues occurs in a p38 MAPK- and MAPKAPK2-dependent manner. Phosphorylated by MAPKAPK2 at Ser-53 and Ser-179; phosphorylation increases its stability and cytoplasmic localization, promotes binding to 14-3-3 adapter proteins and inhibits the recruitment of cytoplasmic CCR4-NOT and PAN2-PAN3 deadenylase complexes to the mRNA decay machinery, thereby inhibiting ZFP36-induced ARE-containing mRNA deadenylation and decay processes. Phosphorylation by MAPKAPK2 does not impair ARE-containing RNA-binding. Phosphorylated in a MAPKAPK2- and p38 MAPK-dependent manner upon skeletal muscle satellite cell activation; this phosphorylation inhibits ZFP36-mediated mRNA decay activity, and hence stabilizes MYOD1 mRNA. Phosphorylated by MAPK1 upon mitogen stimulation. Phosphorylated at Ser-59 and Ser-86; these phosphorylations increase in a SH3KBP1-dependent manner. Phosphorylated at serine and threonine residues in a pyruvate kinase PKM- and p38 MAPK-dependent manner. Phosphorylation at Ser-53 may participate in the PKM-mediated degradation of ZFP36 in a p38 MAPK-dependent manner. Dephosphorylated by serine/threonine phosphatase 2A at Ser-179. Ubiquitinated; pyruvate kinase (PKM)-dependent ubiquitination leads to proteasomal degradation through a p38 MAPK signaling pathway.

The protein resides in the nucleus. It is found in the cytoplasm. It localises to the cytoplasmic granule. The protein localises to the P-body. Its function is as follows. Zinc-finger RNA-binding protein that destabilizes numerous cytoplasmic AU-rich element (ARE)-containing mRNA transcripts by promoting their poly(A) tail removal or deadenylation, and hence provide a mechanism for attenuating protein synthesis. Acts as an 3'-untranslated region (UTR) ARE mRNA-binding adapter protein to communicate signaling events to the mRNA decay machinery. Recruits deadenylase CNOT7 (and probably the CCR4-NOT complex) via association with CNOT1, and hence promotes ARE-mediated mRNA deadenylation. Also functions by recruiting components of the cytoplasmic RNA decay machinery to the bound ARE-containing mRNAs. Self regulates by destabilizing its own mRNA. Binds to 3'-UTR ARE of numerous mRNAs. Also binds to ARE of its own mRNA. Plays a role in anti-inflammatory responses; suppresses tumor necrosis factor (TNF)-alpha production by stimulating ARE-mediated TNF-alpha mRNA decay and several other inflammatory ARE-containing mRNAs in interferon (IFN)- and/or lipopolysaccharide (LPS)-induced macrophages. Also plays a role in the regulation of dendritic cell maturation at the post-transcriptional level, and hence operates as part of a negative feedback loop to limit the inflammatory response. Promotes ARE-mediated mRNA decay of hypoxia-inducible factor HIF1A mRNA during the response of endothelial cells to hypoxia. Positively regulates early adipogenesis of preadipocytes by promoting ARE-mediated mRNA decay of immediate early genes (IEGs). Negatively regulates hematopoietic/erythroid cell differentiation by promoting ARE-mediated mRNA decay of the transcription factor STAT5B mRNA. Plays a role in maintaining skeletal muscle satellite cell quiescence by promoting ARE-mediated mRNA decay of the myogenic determination factor MYOD1 mRNA. Also associates with and regulates the expression of non-ARE-containing target mRNAs at the post-transcriptional level, such as MHC class I mRNAs. Participates in association with argonaute RISC catalytic components in the ARE-mediated mRNA decay mechanism; assists microRNA (miRNA) targeting ARE-containing mRNAs. May also play a role in the regulation of cytoplasmic mRNA decapping; enhances decapping of ARE-containing RNAs, in vitro. Involved in the delivery of target ARE-mRNAs to processing bodies (PBs). In addition to its cytosolic mRNA-decay function, affects nuclear pre-mRNA processing. Negatively regulates nuclear poly(A)-binding protein PABPN1-stimulated polyadenylation activity on ARE-containing pre-mRNA during LPS-stimulated macrophages. Also involved in the regulation of stress granule (SG) and P-body (PB) formation and fusion. Plays a role in the regulation of keratinocyte proliferation, differentiation and apoptosis. Plays a role as a tumor suppressor by inhibiting cell proliferation in breast cancer cells. The polypeptide is mRNA decay activator protein ZFP36 (Rattus norvegicus (Rat)).